A 376-amino-acid polypeptide reads, in one-letter code: Aspartate-semialdehyde dehydrogenase (376 aa).

NADP(+) contacts are provided by residues 11 to 14, 38 to 39, and Gln-74; these read RGMV and TS. Arg-103 serves as a coordination point for phosphate. The active-site Acyl-thioester intermediate is Cys-136. A substrate-binding site is contributed by Gln-163. NADP(+) is bound by residues 166-167 and Pro-194; that span reads SG. Glu-242 contacts substrate. Position 245 (Lys-245) interacts with phosphate. Arg-273 contributes to the substrate binding site. Residue His-280 is the Proton acceptor of the active site. Gln-356 provides a ligand contact to NADP(+).

The protein belongs to the aspartate-semialdehyde dehydrogenase family. Homodimer.

The catalysed reaction is L-aspartate 4-semialdehyde + phosphate + NADP(+) = 4-phospho-L-aspartate + NADPH + H(+). It functions in the pathway amino-acid biosynthesis; L-lysine biosynthesis via DAP pathway; (S)-tetrahydrodipicolinate from L-aspartate: step 2/4. It participates in amino-acid biosynthesis; L-methionine biosynthesis via de novo pathway; L-homoserine from L-aspartate: step 2/3. Its pathway is amino-acid biosynthesis; L-threonine biosynthesis; L-threonine from L-aspartate: step 2/5. Its function is as follows. Catalyzes the NADPH-dependent formation of L-aspartate-semialdehyde (L-ASA) by the reductive dephosphorylation of L-aspartyl-4-phosphate. The polypeptide is Aspartate-semialdehyde dehydrogenase (Bordetella pertussis (strain Tohama I / ATCC BAA-589 / NCTC 13251)).